The following is a 120-amino-acid chain: NAD(P)H-quinone oxidoreductase subunit 3 (120 aa).

3 consecutive transmembrane segments (helical) span residues 10–30 (FLGF…TNLI), 64–84 (MFAL…PWAV), and 89–109 (LGLL…IALA).

The protein belongs to the complex I subunit 3 family. In terms of assembly, NDH-1 can be composed of about 15 different subunits; different subcomplexes with different compositions have been identified which probably have different functions.

It is found in the cellular thylakoid membrane. The catalysed reaction is a plastoquinone + NADH + (n+1) H(+)(in) = a plastoquinol + NAD(+) + n H(+)(out). The enzyme catalyses a plastoquinone + NADPH + (n+1) H(+)(in) = a plastoquinol + NADP(+) + n H(+)(out). Functionally, NDH-1 shuttles electrons from an unknown electron donor, via FMN and iron-sulfur (Fe-S) centers, to quinones in the respiratory and/or the photosynthetic chain. The immediate electron acceptor for the enzyme in this species is believed to be plastoquinone. Couples the redox reaction to proton translocation, and thus conserves the redox energy in a proton gradient. Cyanobacterial NDH-1 also plays a role in inorganic carbon-concentration. The protein is NAD(P)H-quinone oxidoreductase subunit 3 of Prochlorococcus marinus subsp. pastoris (strain CCMP1986 / NIES-2087 / MED4).